We begin with the raw amino-acid sequence, 303 residues long: Acetylglutamate kinase (303 aa).

Residues 76–77 (GG), Arg98, and Asn199 contribute to the substrate site.

This sequence belongs to the acetylglutamate kinase family. ArgB subfamily.

It is found in the cytoplasm. The enzyme catalyses N-acetyl-L-glutamate + ATP = N-acetyl-L-glutamyl 5-phosphate + ADP. It participates in amino-acid biosynthesis; L-arginine biosynthesis; N(2)-acetyl-L-ornithine from L-glutamate: step 2/4. Catalyzes the ATP-dependent phosphorylation of N-acetyl-L-glutamate. This is Acetylglutamate kinase from Clavibacter michiganensis subsp. michiganensis (strain NCPPB 382).